Consider the following 108-residue polypeptide: UPF0060 membrane protein YnfA (108 aa).

The Periplasmic segment spans residues Met-1–Thr-5. A helical transmembrane segment spans residues Leu-6–Leu-26. Over Lys-27–Ala-30 the chain is Cytoplasmic. Residues Ser-31–Leu-51 form a helical membrane-spanning segment. Topologically, residues His-52–Tyr-60 are periplasmic. The helical transmembrane segment at Ala-61–Val-81 threads the bilayer. Topologically, residues Lys-82–Thr-84 are cytoplasmic. Residues Leu-85 to Trp-105 form a helical membrane-spanning segment. The Periplasmic portion of the chain corresponds to Gly-106 to Thr-108.

It belongs to the UPF0060 family.

It is found in the cell inner membrane. The chain is UPF0060 membrane protein YnfA from Escherichia coli O139:H28 (strain E24377A / ETEC).